The sequence spans 903 residues: Pentatricopeptide repeat-containing protein At3g02330, mitochondrial (903 aa).

The N-terminal 31 residues, 1 to 31 (MAESLRLLHMTRSVVSFNRCLTEKISYRRVP), are a transit peptide targeting the mitochondrion. 20 PPR repeats span residues 47 to 81 (STTN…GFRP), 82 to 112 (TTFV…MPLR), 113 to 143 (DVVS…MPVR), 144 to 178 (DVVS…GIEF), 179 to 213 (DGRT…GCDT), 214 to 244 (DVVA…IPEK), 245 to 279 (NSVS…NAGV), 280 to 314 (SQSI…DFAA), 346 to 380 (NRQS…GLGF), 381 to 415 (DEIS…SLSL), 416 to 446 (DVCV…MRRR), 447 to 481 (DAVS…RIEP), 482 to 515 (DEFT…GMAS), 516 to 550 (NSSV…ANVS), 567 to 601 (MCVS…GITP), 602 to 636 (DKFT…ELQS), 637 to 667 (DVYI…SLRR), 668 to 702 (DFVT…NIKP), 703 to 738 (NHVT…GLDP), and 739 to 769 (QLPH…MPFE). A type E motif region spans residues 774–850 (IWRTLLGVCT…EPGCSWVELK (77 aa)). Positions 851–881 (DELHVFLVGDKAHPRWEEIYEELGLIYSEMK) are type E(+) motif.

This sequence belongs to the PPR family. PCMP-E subfamily. Interacts with MORF1/RIP8.

Its subcellular location is the mitochondrion. Its function is as follows. Involved in C-to-U editing of mitochondrial RNA. Required for RNA editing at 8 sites in 6 different mRNAs in mitochondria. This is Pentatricopeptide repeat-containing protein At3g02330, mitochondrial (PCMP-E90) from Arabidopsis thaliana (Mouse-ear cress).